An 82-amino-acid polypeptide reads, in one-letter code: Protein transport protein SBH1 (82 aa).

Residues 1–36 (MSSPTPPGGQRTLQKRKQGSSQKVAASAPKKNTNSN) form a disordered region. The Cytoplasmic segment spans residues 1 to 53 (MSSPTPPGGQRTLQKRKQGSSQKVAASAPKKNTNSNNSILKIYSDEATGLRVD). The span at 19–36 (GSSQKVAASAPKKNTNSN) shows a compositional bias: polar residues. A helical transmembrane segment spans residues 54 to 74 (PLVVLFLAVGFIFSVVALHVI).

Belongs to the SEC61-beta family. As to quaternary structure, component of the heterotrimeric Sec61 complex, which is composed of SSH1, SBH1 and SSS1. Presumably three to four Sec61 heterotrimers assemble into an oligomeric ring with a central aqueous pore. In cotranslational ER import, the pore diameter varies from 9-15 A in a ribosome-free resting state to 40-60 A in a functional state when associated with the ribosome. The Sec61 complex is part of a channel-forming translocon complex whose composition seem to change dependent upon different functional states. During post-translational ER import the Sec61 complex associates with the Sec62/63 complex to form the Sec complex. SBH1 interacts OST2, OST4 and WBP1 components of the OT complex.

It localises to the endoplasmic reticulum membrane. Part of the Sec61 complex, which is the major component of a channel-forming translocon complex that mediates protein translocation across the endoplasmic reticulum (ER). The functional states of the translocon complex include co- and post-translational ER import, cotranslational membrane protein integration and retrograde transport of misfolded proteins out of the ER. In the cotranslational pathway, ribosomes synthesizing presecretory proteins are targeted to the translocon by the cytosolic signal recognition particle (SRP) and its ER-localized receptor. The association of the Sec61 complex with the ribosome is mediated by the 28S rRNA of the large ribosomal subunit. SRP-independent post-translational translocation requires the association of additional factors, such as the Sec62/63 complex and KAR2. This Saccharomyces cerevisiae (strain ATCC 204508 / S288c) (Baker's yeast) protein is Protein transport protein SBH1 (SBH1).